Here is a 567-residue protein sequence, read N- to C-terminus: Dihydroxy-acid dehydratase 2 (567 aa).

Cys56 serves as a coordination point for [2Fe-2S] cluster. Asp88 provides a ligand contact to Mg(2+). A [2Fe-2S] cluster-binding site is contributed by Cys129. Asp130 and Lys131 together coordinate Mg(2+). Residue Lys131 is modified to N6-carboxylysine. Cys206 provides a ligand contact to [2Fe-2S] cluster. Glu457 lines the Mg(2+) pocket. The Proton acceptor role is filled by Ser483.

Belongs to the IlvD/Edd family. In terms of assembly, homodimer. It depends on [2Fe-2S] cluster as a cofactor. Mg(2+) is required as a cofactor.

The enzyme catalyses (2R)-2,3-dihydroxy-3-methylbutanoate = 3-methyl-2-oxobutanoate + H2O. The catalysed reaction is (2R,3R)-2,3-dihydroxy-3-methylpentanoate = (S)-3-methyl-2-oxopentanoate + H2O. The protein operates within amino-acid biosynthesis; L-isoleucine biosynthesis; L-isoleucine from 2-oxobutanoate: step 3/4. It participates in amino-acid biosynthesis; L-valine biosynthesis; L-valine from pyruvate: step 3/4. Functionally, functions in the biosynthesis of branched-chain amino acids. Catalyzes the dehydration of (2R,3R)-2,3-dihydroxy-3-methylpentanoate (2,3-dihydroxy-3-methylvalerate) into 2-oxo-3-methylpentanoate (2-oxo-3-methylvalerate) and of (2R)-2,3-dihydroxy-3-methylbutanoate (2,3-dihydroxyisovalerate) into 2-oxo-3-methylbutanoate (2-oxoisovalerate), the penultimate precursor to L-isoleucine and L-valine, respectively. This is Dihydroxy-acid dehydratase 2 from Corynebacterium efficiens (strain DSM 44549 / YS-314 / AJ 12310 / JCM 11189 / NBRC 100395).